Here is a 350-residue protein sequence, read N- to C-terminus: 4-hydroxy-2-oxovalerate aldolase 3 (350 aa).

In terms of domain architecture, Pyruvate carboxyltransferase spans 13–265 (VVFHDMCLRD…DTGVDLFRLM (253 aa)). Position 21 to 22 (21 to 22 (RD)) interacts with substrate. Asp22 contributes to the Mn(2+) binding site. His25 (proton acceptor) is an active-site residue. Ser175 and His204 together coordinate substrate. Mn(2+) contacts are provided by His204 and His206. Position 295 (Tyr295) interacts with substrate.

It belongs to the 4-hydroxy-2-oxovalerate aldolase family.

It carries out the reaction (S)-4-hydroxy-2-oxopentanoate = acetaldehyde + pyruvate. The sequence is that of 4-hydroxy-2-oxovalerate aldolase 3 (lapG) from Azotobacter vinelandii (strain DJ / ATCC BAA-1303).